A 271-amino-acid chain; its full sequence is 3-methyl-2-oxobutanoate hydroxymethyltransferase (271 aa).

The Mg(2+) site is built by Asp51 and Asp90. 3-methyl-2-oxobutanoate-binding positions include Asp51 to Ser52, Asp90, and Lys118. A Mg(2+)-binding site is contributed by Glu120. Catalysis depends on Glu186, which acts as the Proton acceptor.

Belongs to the PanB family. As to quaternary structure, homodecamer; pentamer of dimers. The cofactor is Mg(2+).

The protein resides in the cytoplasm. It carries out the reaction 3-methyl-2-oxobutanoate + (6R)-5,10-methylene-5,6,7,8-tetrahydrofolate + H2O = 2-dehydropantoate + (6S)-5,6,7,8-tetrahydrofolate. Its pathway is cofactor biosynthesis; (R)-pantothenate biosynthesis; (R)-pantoate from 3-methyl-2-oxobutanoate: step 1/2. Its function is as follows. Catalyzes the reversible reaction in which hydroxymethyl group from 5,10-methylenetetrahydrofolate is transferred onto alpha-ketoisovalerate to form ketopantoate. The protein is 3-methyl-2-oxobutanoate hydroxymethyltransferase of Xanthomonas campestris pv. campestris (strain B100).